The primary structure comprises 156 residues: ATP synthase subunit b (156 aa).

A helical transmembrane segment spans residues 11 to 31 (AIAFVLFVLFCMKYVWPPIMA).

This sequence belongs to the ATPase B chain family. As to quaternary structure, F-type ATPases have 2 components, F(1) - the catalytic core - and F(0) - the membrane proton channel. F(1) has five subunits: alpha(3), beta(3), gamma(1), delta(1), epsilon(1). F(0) has three main subunits: a(1), b(2) and c(10-14). The alpha and beta chains form an alternating ring which encloses part of the gamma chain. F(1) is attached to F(0) by a central stalk formed by the gamma and epsilon chains, while a peripheral stalk is formed by the delta and b chains.

The protein localises to the cell inner membrane. Its function is as follows. F(1)F(0) ATP synthase produces ATP from ADP in the presence of a proton or sodium gradient. F-type ATPases consist of two structural domains, F(1) containing the extramembraneous catalytic core and F(0) containing the membrane proton channel, linked together by a central stalk and a peripheral stalk. During catalysis, ATP synthesis in the catalytic domain of F(1) is coupled via a rotary mechanism of the central stalk subunits to proton translocation. In terms of biological role, component of the F(0) channel, it forms part of the peripheral stalk, linking F(1) to F(0). The chain is ATP synthase subunit b from Proteus mirabilis (strain HI4320).